Consider the following 526-residue polypeptide: Bifunctional purine biosynthesis protein PurH (526 aa).

Residues 1-145 (MSKAPLALLS…KNHAHVGIVT (145 aa)) form the MGS-like domain.

The protein belongs to the PurH family.

The catalysed reaction is (6R)-10-formyltetrahydrofolate + 5-amino-1-(5-phospho-beta-D-ribosyl)imidazole-4-carboxamide = 5-formamido-1-(5-phospho-D-ribosyl)imidazole-4-carboxamide + (6S)-5,6,7,8-tetrahydrofolate. It catalyses the reaction IMP + H2O = 5-formamido-1-(5-phospho-D-ribosyl)imidazole-4-carboxamide. It participates in purine metabolism; IMP biosynthesis via de novo pathway; 5-formamido-1-(5-phospho-D-ribosyl)imidazole-4-carboxamide from 5-amino-1-(5-phospho-D-ribosyl)imidazole-4-carboxamide (10-formyl THF route): step 1/1. The protein operates within purine metabolism; IMP biosynthesis via de novo pathway; IMP from 5-formamido-1-(5-phospho-D-ribosyl)imidazole-4-carboxamide: step 1/1. This is Bifunctional purine biosynthesis protein PurH from Psychrobacter cryohalolentis (strain ATCC BAA-1226 / DSM 17306 / VKM B-2378 / K5).